Reading from the N-terminus, the 242-residue chain is Aquaporin (242 aa).

Residues 1-11 (MNTSTKLICQK) are Cytoplasmic-facing. The chain crosses the membrane as a helical span at residues 12-32 (LFAEMLCSCIFGFAVYSAILN). At 33–39 (TKASNSS) the chain is on the extracellular side. A helical membrane pass occupies residues 40-60 (ISSTTVGLTVCFSSISLIYTF). Over 61–83 (CDHSVAHFNPAITIAAICTGKLD) the chain is Cytoplasmic. Positions 69-71 (NPA) match the NPA motif. The chain crosses the membrane as a helical span at residues 84 to 104 (ILLGIGYVIAQLIGFILATLL). Topologically, residues 105–133 (TVVCFPYGYLKTMEFIASARISDDISTVN) are extracellular. Residues 134 to 154 (LFFTEFILSFILVFIAFEVGI) traverse the membrane as a helical segment. At 155–175 (NAIREPGVTLFVGIKQIDRSK) the chain is on the cytoplasmic side. A helical membrane pass occupies residues 176–196 (FAPLTIGITLGFLAFLASTTS). Residues 197–217 (GGAFNPGIVWGPAIMGGNFDD) lie on the Extracellular side of the membrane. Residues 201–203 (NPG) carry the NPG motif. Residues 218–238 (FVIYIISELSGGLLGAFIQVF) form a helical membrane-spanning segment. Over 239–242 (LLFK) the chain is Cytoplasmic.

The protein belongs to the MIP/aquaporin (TC 1.A.8) family.

Its subcellular location is the cell membrane. In terms of biological role, water channel required to facilitate the transport of water across membranes. Involved in osmotolerance. This Enterocytozoon bieneusi (strain H348) (Microsporidian parasite) protein is Aquaporin (AQP).